The following is a 460-amino-acid chain: 3-isopropylmalate dehydratase large subunit (460 aa).

3 residues coordinate [4Fe-4S] cluster: C338, C398, and C401.

This sequence belongs to the aconitase/IPM isomerase family. LeuC type 1 subfamily. In terms of assembly, heterodimer of LeuC and LeuD. The cofactor is [4Fe-4S] cluster.

It catalyses the reaction (2R,3S)-3-isopropylmalate = (2S)-2-isopropylmalate. It functions in the pathway amino-acid biosynthesis; L-leucine biosynthesis; L-leucine from 3-methyl-2-oxobutanoate: step 2/4. In terms of biological role, catalyzes the isomerization between 2-isopropylmalate and 3-isopropylmalate, via the formation of 2-isopropylmaleate. The polypeptide is 3-isopropylmalate dehydratase large subunit (Streptococcus thermophilus (strain CNRZ 1066)).